Here is a 131-residue protein sequence, read N- to C-terminus: Modulator protein MzrA (131 aa).

The Cytoplasmic segment spans residues 1 to 14 (MSIRWLFPKLTPRK). The chain crosses the membrane as a helical span at residues 15–31 (VARILILLALPIIALTQ). Residues 32 to 131 (SQSLRHSQDD…KLTQKQSKLG (100 aa)) lie on the Periplasmic side of the membrane.

The protein belongs to the MzrA family. Interacts with EnvZ.

Its subcellular location is the cell inner membrane. Its function is as follows. Modulates the activity of the EnvZ/OmpR two-component regulatory system, probably by directly modulating EnvZ enzymatic activity and increasing stability of phosphorylated OmpR. The protein is Modulator protein MzrA of Pectobacterium carotovorum subsp. carotovorum (strain PC1).